A 263-amino-acid polypeptide reads, in one-letter code: Calpain small subunit 1 (263 aa).

Met1 bears the N-acetylmethionine mark. Phosphoserine is present on Ser6. Residues 91-125 enclose the EF-hand 1; atypical domain; sequence EEVRQFRRLFAQLAGDDMEVSATELMNILNKVVTR. Ala104, Asp107, Glu109, Glu114, Asp132, Asp147, Asp149, Thr151, Lys153, and Glu158 together coordinate Ca(2+). EF-hand domains lie at 134 to 167, 164 to 199, 200 to 228, and 229 to 263; these read FGID…NNIK, NNIK…AGFR, LNEH…ISCL, and VRLD…TMYS. Lys174 is modified (N6-acetyllysine). Ca(2+) contacts are provided by Asp177, Asp179, Ser181, Thr183, Glu188, and Asp220.

Homodimer or heterodimer of a large (catalytic) and a small (regulatory) subunit. In presence of calcium, the heterodimer dissociates.

Its subcellular location is the cytoplasm. It localises to the cell membrane. Its function is as follows. Regulatory subunit of the calcium-regulated non-lysosomal thiol-protease which catalyzes limited proteolysis of substrates involved in cytoskeletal remodeling and signal transduction. Essential for embryonic development. In Bos taurus (Bovine), this protein is Calpain small subunit 1 (CAPNS1).